We begin with the raw amino-acid sequence, 263 residues long: Phosphatidylglycerol--prolipoprotein diacylglyceryl transferase (263 aa).

4 helical membrane passes run 6–26 (VIFS…VLGI), 50–70 (LLTA…VLIY), 85–105 (TWEG…AVII), and 112–132 (IPTF…LFLG). R133 contributes to the a 1,2-diacyl-sn-glycero-3-phospho-(1'-sn-glycerol) binding site. The next 3 helical transmembrane spans lie at 169–189 (LYEA…LFFL), 197–217 (GALT…VEFF), and 233–253 (MGQL…LGAL).

It belongs to the Lgt family.

Its subcellular location is the cell membrane. The enzyme catalyses L-cysteinyl-[prolipoprotein] + a 1,2-diacyl-sn-glycero-3-phospho-(1'-sn-glycerol) = an S-1,2-diacyl-sn-glyceryl-L-cysteinyl-[prolipoprotein] + sn-glycerol 1-phosphate + H(+). It functions in the pathway protein modification; lipoprotein biosynthesis (diacylglyceryl transfer). Functionally, catalyzes the transfer of the diacylglyceryl group from phosphatidylglycerol to the sulfhydryl group of the N-terminal cysteine of a prolipoprotein, the first step in the formation of mature lipoproteins. The protein is Phosphatidylglycerol--prolipoprotein diacylglyceryl transferase of Wolbachia pipientis wMel.